The following is a 146-amino-acid chain: Ribosome maturation factor RimP (146 aa).

This sequence belongs to the RimP family.

Its subcellular location is the cytoplasm. Functionally, required for maturation of 30S ribosomal subunits. The protein is Ribosome maturation factor RimP of Helicobacter pylori (strain J99 / ATCC 700824) (Campylobacter pylori J99).